The chain runs to 156 residues: Small ribosomal subunit protein uS7 (156 aa).

It belongs to the universal ribosomal protein uS7 family. In terms of assembly, part of the 30S ribosomal subunit. Contacts proteins S9 and S11.

Functionally, one of the primary rRNA binding proteins, it binds directly to 16S rRNA where it nucleates assembly of the head domain of the 30S subunit. Is located at the subunit interface close to the decoding center, probably blocks exit of the E-site tRNA. This Nitrosomonas eutropha (strain DSM 101675 / C91 / Nm57) protein is Small ribosomal subunit protein uS7.